We begin with the raw amino-acid sequence, 460 residues long: Methionine aminopeptidase 2-1 (460 aa).

Residues Met1–Pro90 form a disordered region. Over residues Ser30–Gly39 the composition is skewed to low complexity. Residues Glu42–Glu52 show a composition bias toward acidic residues. Residues Thr69–Ser81 are compositionally biased toward basic residues. His212 contacts substrate. Positions 233, 244, and 313 each coordinate a divalent metal cation. His321 lines the substrate pocket. The a divalent metal cation site is built by Glu346 and Glu441.

This sequence belongs to the peptidase M24A family. Methionine aminopeptidase eukaryotic type 2 subfamily. Co(2+) is required as a cofactor. It depends on Zn(2+) as a cofactor. Requires Mn(2+) as cofactor. The cofactor is Fe(2+).

It is found in the cytoplasm. The catalysed reaction is Release of N-terminal amino acids, preferentially methionine, from peptides and arylamides.. Functionally, cotranslationally removes the N-terminal methionine from nascent proteins. The N-terminal methionine is often cleaved when the second residue in the primary sequence is small and uncharged (Met-Ala-, Cys, Gly, Pro, Ser, Thr, or Val). The polypeptide is Methionine aminopeptidase 2-1 (Leptosphaeria maculans (strain JN3 / isolate v23.1.3 / race Av1-4-5-6-7-8) (Blackleg fungus)).